A 2486-amino-acid polypeptide reads, in one-letter code: Nonribosomal peptide synthetase nanA (2486 aa).

The interval 231–637 is adenylation 1; the sequence is FSARQPLSPA…GRRGTQVKLR (407 aa). One can recognise a Carrier 1 domain in the interval 786 to 860; sequence TDIELKVHAL…DLARSAKETS (75 aa). An O-(pantetheine 4'-phosphoryl)serine modification is found at serine 820. A condensation 1 region spans residues 902-1314; it reads EDAYPCTPLQ…LKSVPRVSSQ (413 aa). Residues 1339–1735 form an adenylation 2 region; that stretch reads RAQARKTPLA…GRIGDQMKIR (397 aa). 2 consecutive Carrier domains span residues 1872–1948 and 2404–2480; these read PPST…SSAS and SSSE…QTQA. O-(pantetheine 4'-phosphoryl)serine occurs at positions 1909 and 2441. Residues 2404-2480 are condensation 2; that stretch reads SSSETIVEPL…KLARLLQTQA (77 aa).

Belongs to the NRP synthetase family.

It functions in the pathway secondary metabolite biosynthesis. Functionally, nonribosomal peptide synthetase; part of the gene cluster that mediates the biosynthesis of the benzazepine alkaloid nanangelenin A which contains an unprecedented 3,4-dihydro-1-benzazepine-2,5-dione-N-prenyl-N-acetoxy-anthranilamide scaffold. The first step of nanangelenin biosynthesis is catalyzed by the indoleamine 2,3-dioxygenase nanC which produces N-formyl-kynurenine through the catabolism of tryptophan. The two-module NRPS nanA then utilizes anthranilate (Ant) and L-kynurenine (L-Kyn) to assemble the dipeptide product nanangelenin B. The first adenylation domain of nanA (A1) loads anthranilate onto the T1 domain, while A2 loads kynurenine, generated through spontaneous nonenzymatic deformylation of the nanC-supplied N-formyl-kynurenine. The peptide bond formation between the tethered amino acids is catalyzed by the first condensation domain (C1) between anthranilate's carbonyl carbon and kynurenine's aliphatic primary amine. The second C domain (C2) catalyzes the final cyclization event between the aromatic amine of kynurenine and the tethered carbonyl carbon, yielding nanangelenin B. The terminal T3 domain enhances the catalytic efficiency of C2, suggesting the T2-tethered Ant-L-Kyn is transferred to T3 prior to cyclization by C2. Once released from nanA, nanangelenin B is then prenylated by the prenyltransferase nanD to form nanangelenin C. Nanangelenin C is then N-hydroxylated by the FAD-dependent monooxygenase nanF and further acetylated by the acetyltransferase nanB to yield nanangelenin F. Finally, the N-methyltransferase nanE methylates the amide nitrogen of 1-benzazepine to convert nanangelenin F into nanangelenin A. NanE is also able to methylate most of the intermediates of the pathway such as nanangelenin B and nanangelenin C to produce nanangelenin D and nanangelenin E, respectively. This Aspergillus nanangensis protein is Nonribosomal peptide synthetase nanA.